A 121-amino-acid chain; its full sequence is B-box domain protein 31 (121 aa).

A B box-type; atypical zinc finger spans residues S26 to L72. A PFVFL motif is present at residues P117 to L121.

Highly expressed in shoot apical meristems and in vascular tissues of leaves. Also detected in petioles.

Developmental regulator acting by forming heterodimeric complexes, that sequester CO and CO-like (COL) proteins into non-functional complexes. Involved in the CO-mediated long-day flowering-promotion pathway. Engages CO and the transcriptional repressor TPL in a tripartite complex. In Arabidopsis thaliana (Mouse-ear cress), this protein is B-box domain protein 31.